Here is a 1432-residue protein sequence, read N- to C-terminus: Superkiller protein 3 (1432 aa).

2 TPR repeats span residues 4-37 (IKQLLKEAKQELTNRDYEETIEISEKVLKLDPDN) and 47-80 (ALSSLPASNNVSSNRNLERATNHYVSAAKLVPDN). The tract at residues 339-397 (SANKPPEGHKKTEKETDIKDVDETNEDEVKDRVEDEVKDRVEDEVKDQDEEAKEDEEED) is disordered. Positions 344 to 381 (PEGHKKTEKETDIKDVDETNEDEVKDRVEDEVKDRVED) are enriched in basic and acidic residues. Acidic residues predominate over residues 382-397 (EVKDQDEEAKEDEEED). 9 TPR repeats span residues 425 to 458 (ILAHRILCQYYLLTKEYEAALPYIKNGISLIAYN), 471 to 507 (REFSLDLATVYTYVDAPKDHNAALKLYDNILSGDFSN), 508 to 541 (IQAKMGKGIIFIERKNWKDAMTLLTQVHEQSPNN), 627 to 661 (APGFSTLGDIYCHYYKDHLRAFKCYFKAFDLDAGD), 702 to 735 (NWPFRVVGIAHLEKQEESDSIEWFQSALRVDPND), 736 to 769 (VESWVGLGQAYHACGRIEASIKVFDKAIQLRPSH), 945 to 985 (ASYW…QSNT), 987 to 1018 (ETWIGLGIATMDINFRVSQHCFIKATALEPKA), and 1226 to 1259 (ISNHICLGLSYFFLNDFDQTLNQFQELLSISKDS).

Belongs to the SKI3 family. In terms of assembly, component of the SKI complex composed of at least SKI2, SKI3 and SKI8. The SKI complex interacts with SKI7, which makes the link between the SKI complex and the exosome in order to perform mRNA degradation.

It is found in the cytoplasm. It localises to the nucleus. In terms of biological role, component of the SKI complex involved in 3'-mRNA degradation pathway. Represses dsRNA virus propagation by specifically blocking translation of viral mRNAs, perhaps recognizing the absence of CAP or poly(A). Essential for cell growth only in the presence of M1 replicon. This is Superkiller protein 3 (SKI3) from Saccharomyces cerevisiae (strain ATCC 204508 / S288c) (Baker's yeast).